The chain runs to 462 residues: Argininosuccinate lyase (462 aa).

Belongs to the lyase 1 family. Argininosuccinate lyase subfamily.

It is found in the cytoplasm. The catalysed reaction is 2-(N(omega)-L-arginino)succinate = fumarate + L-arginine. It participates in amino-acid biosynthesis; L-arginine biosynthesis; L-arginine from L-ornithine and carbamoyl phosphate: step 3/3. This is Argininosuccinate lyase from Streptococcus agalactiae serotype Ia (strain ATCC 27591 / A909 / CDC SS700).